The sequence spans 538 residues: CTP synthase (538 aa).

The amidoligase domain stretch occupies residues 1 to 267 (MDRAKFIFVT…LTPIARRFNL (267 aa)). Ser-15 contributes to the CTP binding site. Ser-15 is a UTP binding site. ATP is bound by residues 16–21 (SLGKGI) and Asp-73. 2 residues coordinate Mg(2+): Asp-73 and Glu-141. CTP is bound by residues 148–150 (DME), 188–193 (KTKPTQ), and Lys-224. Residues 188–193 (KTKPTQ) and Lys-224 contribute to the UTP site. Positions 292–538 (KIGFVGKYLS…DFIKSALSKS (247 aa)) constitute a Glutamine amidotransferase type-1 domain. Gly-351 is an L-glutamine binding site. Cys-378 functions as the Nucleophile; for glutamine hydrolysis in the catalytic mechanism. Residues 379–382 (LGMQ), Glu-402, and Arg-469 contribute to the L-glutamine site. Active-site residues include His-513 and Glu-515.

The protein belongs to the CTP synthase family. Homotetramer.

The enzyme catalyses UTP + L-glutamine + ATP + H2O = CTP + L-glutamate + ADP + phosphate + 2 H(+). It carries out the reaction L-glutamine + H2O = L-glutamate + NH4(+). It catalyses the reaction UTP + NH4(+) + ATP = CTP + ADP + phosphate + 2 H(+). The protein operates within pyrimidine metabolism; CTP biosynthesis via de novo pathway; CTP from UDP: step 2/2. Allosterically activated by GTP, when glutamine is the substrate; GTP has no effect on the reaction when ammonia is the substrate. The allosteric effector GTP functions by stabilizing the protein conformation that binds the tetrahedral intermediate(s) formed during glutamine hydrolysis. Inhibited by the product CTP, via allosteric rather than competitive inhibition. Its function is as follows. Catalyzes the ATP-dependent amination of UTP to CTP with either L-glutamine or ammonia as the source of nitrogen. Regulates intracellular CTP levels through interactions with the four ribonucleotide triphosphates. The chain is CTP synthase from Helicobacter pylori (strain HPAG1).